Reading from the N-terminus, the 1407-residue chain is DNA-directed RNA polymerase subunit beta' (1407 aa).

4 residues coordinate Zn(2+): Cys70, Cys72, Cys85, and Cys88. Mg(2+) contacts are provided by Asp460, Asp462, and Asp464. Cys814, Cys888, Cys895, and Cys898 together coordinate Zn(2+). Lys972 carries the post-translational modification N6-acetyllysine.

It belongs to the RNA polymerase beta' chain family. In terms of assembly, the RNAP catalytic core consists of 2 alpha, 1 beta, 1 beta' and 1 omega subunit. When a sigma factor is associated with the core the holoenzyme is formed, which can initiate transcription. It depends on Mg(2+) as a cofactor. The cofactor is Zn(2+).

It catalyses the reaction RNA(n) + a ribonucleoside 5'-triphosphate = RNA(n+1) + diphosphate. In terms of biological role, DNA-dependent RNA polymerase catalyzes the transcription of DNA into RNA using the four ribonucleoside triphosphates as substrates. The polypeptide is DNA-directed RNA polymerase subunit beta' (Shigella boydii serotype 18 (strain CDC 3083-94 / BS512)).